We begin with the raw amino-acid sequence, 268 residues long: Nuclear protein UL4 homolog (268 aa).

The protein belongs to the alphaherpesvirinae HHV-1 UL4 family.

Its subcellular location is the host nucleus. This Gallid herpesvirus 2 (strain Chicken/Md5/ATCC VR-987) (GaHV-2) protein is Nuclear protein UL4 homolog (MDV016).